We begin with the raw amino-acid sequence, 272 residues long: Bifunctional protein FolD (272 aa).

NADP(+) contacts are provided by residues 155-157 (GRS), serine 182, and isoleucine 223.

This sequence belongs to the tetrahydrofolate dehydrogenase/cyclohydrolase family. As to quaternary structure, homodimer.

The enzyme catalyses (6R)-5,10-methylene-5,6,7,8-tetrahydrofolate + NADP(+) = (6R)-5,10-methenyltetrahydrofolate + NADPH. It carries out the reaction (6R)-5,10-methenyltetrahydrofolate + H2O = (6R)-10-formyltetrahydrofolate + H(+). It functions in the pathway one-carbon metabolism; tetrahydrofolate interconversion. In terms of biological role, catalyzes the oxidation of 5,10-methylenetetrahydrofolate to 5,10-methenyltetrahydrofolate and then the hydrolysis of 5,10-methenyltetrahydrofolate to 10-formyltetrahydrofolate. The chain is Bifunctional protein FolD from Fervidobacterium nodosum (strain ATCC 35602 / DSM 5306 / Rt17-B1).